Reading from the N-terminus, the 191-residue chain is Fe/S biogenesis protein NfuA (191 aa).

[4Fe-4S] cluster is bound by residues Cys-149 and Cys-152.

The protein belongs to the NfuA family. As to quaternary structure, homodimer. It depends on [4Fe-4S] cluster as a cofactor.

Its function is as follows. Involved in iron-sulfur cluster biogenesis. Binds a 4Fe-4S cluster, can transfer this cluster to apoproteins, and thereby intervenes in the maturation of Fe/S proteins. Could also act as a scaffold/chaperone for damaged Fe/S proteins. This is Fe/S biogenesis protein NfuA from Cronobacter sakazakii (strain ATCC BAA-894) (Enterobacter sakazakii).